We begin with the raw amino-acid sequence, 164 residues long: Protein SprT (164 aa).

Residues 14–156 enclose the SprT-like domain; the sequence is QQAETFFKRP…LCKRCRAILV (143 aa). H69 contributes to the Zn(2+) binding site. E70 is an active-site residue. H73 contacts Zn(2+).

It belongs to the SprT family. Zn(2+) serves as cofactor.

Its subcellular location is the cytoplasm. The chain is Protein SprT from Pseudomonas putida (strain GB-1).